Reading from the N-terminus, the 382-residue chain is S-adenosylmethionine synthase (382 aa).

His15 is a binding site for ATP. Residue Asp17 participates in Mg(2+) binding. Glu43 contacts K(+). L-methionine-binding residues include Glu56 and Gln99. The flexible loop stretch occupies residues 99 to 109; the sequence is QSPDINQGVDR. Residues 164–166, 230–231, Asp239, 245–246, Ala262, and Lys266 contribute to the ATP site; these read DAK, RF, and RK. Asp239 contacts L-methionine. Position 270 (Lys270) interacts with L-methionine.

The protein belongs to the AdoMet synthase family. Homotetramer; dimer of dimers. The cofactor is Mg(2+). Requires K(+) as cofactor.

The protein localises to the cytoplasm. The catalysed reaction is L-methionine + ATP + H2O = S-adenosyl-L-methionine + phosphate + diphosphate. The protein operates within amino-acid biosynthesis; S-adenosyl-L-methionine biosynthesis; S-adenosyl-L-methionine from L-methionine: step 1/1. Its function is as follows. Catalyzes the formation of S-adenosylmethionine (AdoMet) from methionine and ATP. The overall synthetic reaction is composed of two sequential steps, AdoMet formation and the subsequent tripolyphosphate hydrolysis which occurs prior to release of AdoMet from the enzyme. The chain is S-adenosylmethionine synthase from Glaesserella parasuis serovar 5 (strain SH0165) (Haemophilus parasuis).